The sequence spans 213 residues: ATP phosphoribosyltransferase (213 aa).

The protein belongs to the ATP phosphoribosyltransferase family. Short subfamily. In terms of assembly, heteromultimer composed of HisG and HisZ subunits.

The protein localises to the cytoplasm. It catalyses the reaction 1-(5-phospho-beta-D-ribosyl)-ATP + diphosphate = 5-phospho-alpha-D-ribose 1-diphosphate + ATP. It functions in the pathway amino-acid biosynthesis; L-histidine biosynthesis; L-histidine from 5-phospho-alpha-D-ribose 1-diphosphate: step 1/9. Its function is as follows. Catalyzes the condensation of ATP and 5-phosphoribose 1-diphosphate to form N'-(5'-phosphoribosyl)-ATP (PR-ATP). Has a crucial role in the pathway because the rate of histidine biosynthesis seems to be controlled primarily by regulation of HisG enzymatic activity. The chain is ATP phosphoribosyltransferase (hisG) from Listeria monocytogenes serovar 1/2a (strain ATCC BAA-679 / EGD-e).